Reading from the N-terminus, the 427-residue chain is Serine--tRNA ligase (427 aa).

231 to 233 (TAE) is a binding site for L-serine. ATP is bound at residue 262 to 264 (RSE). E285 is an L-serine binding site. Residue 349–352 (EISS) participates in ATP binding. S385 serves as a coordination point for L-serine.

The protein belongs to the class-II aminoacyl-tRNA synthetase family. Type-1 seryl-tRNA synthetase subfamily. In terms of assembly, homodimer. The tRNA molecule binds across the dimer.

The protein localises to the cytoplasm. The enzyme catalyses tRNA(Ser) + L-serine + ATP = L-seryl-tRNA(Ser) + AMP + diphosphate + H(+). It carries out the reaction tRNA(Sec) + L-serine + ATP = L-seryl-tRNA(Sec) + AMP + diphosphate + H(+). It functions in the pathway aminoacyl-tRNA biosynthesis; selenocysteinyl-tRNA(Sec) biosynthesis; L-seryl-tRNA(Sec) from L-serine and tRNA(Sec): step 1/1. Catalyzes the attachment of serine to tRNA(Ser). Is also able to aminoacylate tRNA(Sec) with serine, to form the misacylated tRNA L-seryl-tRNA(Sec), which will be further converted into selenocysteinyl-tRNA(Sec). This Brucella abortus (strain S19) protein is Serine--tRNA ligase.